A 284-amino-acid polypeptide reads, in one-letter code: L-ribulose-5-phosphate 3-epimerase UlaE (284 aa).

Belongs to the L-ribulose-5-phosphate 3-epimerase family.

It carries out the reaction L-ribulose 5-phosphate = L-xylulose 5-phosphate. Its pathway is cofactor degradation; L-ascorbate degradation; D-xylulose 5-phosphate from L-ascorbate: step 3/4. In terms of biological role, catalyzes the isomerization of L-xylulose-5-phosphate to L-ribulose-5-phosphate. Is involved in the anaerobic L-ascorbate utilization. The sequence is that of L-ribulose-5-phosphate 3-epimerase UlaE from Salmonella heidelberg (strain SL476).